The sequence spans 506 residues: Maturase K (506 aa).

Belongs to the intron maturase 2 family. MatK subfamily.

Its subcellular location is the plastid. The protein resides in the chloroplast. Its function is as follows. Usually encoded in the trnK tRNA gene intron. Probably assists in splicing its own and other chloroplast group II introns. The sequence is that of Maturase K from Phyllodoce empetriformis (Pink mountainheath).